The sequence spans 432 residues: Competence protein ComFA (432 aa).

C40, C43, C60, and C63 together coordinate Zn(2+). The Helicase ATP-binding domain occupies 107-257; the sequence is LQAVDKQKPT…RLGELKRLNL (151 aa). 120–127 is an ATP binding site; the sequence is AVTGAGKT. The DEAD box signature appears at 205–208; sequence DEVD. In terms of domain architecture, Helicase C-terminal spans 289–432; sequence KLKSYIEKQR…IQMMNKEAGL (144 aa).

It belongs to the DEAD box helicase family. As to quaternary structure, monomer and dimer in solution. Interacts with DprA and ComFC; ComFA-ComFC form rings about 150 Angstroms in diameter with apparent 6-fold symmetry. The cofactor is Zn(2+).

The protein localises to the cytoplasm. Involved in transformation (genetic competence for DNA uptake). DNA uptake is energy dependent, this protein may provide the driving force for DNA uptake. Does not have helicase activity, translocates on single-stranded (ss)DNA in a 5'-3' direction in an ATP-dependent manner, but does not unwind double-stranded (ds)DNA (tested with 5'- and 3'-overhang dsDNA). ATP hydrolysis causes the release of ssDNA from ComFA. A ssDNA-stimulated ATPase; dsDNA does not stimulate ATPase. ATP hydrolysis causes the release of ssDNA from ComFA. ComFC has no effect on ATPase activity. Binds ssDNA but only very poorly to dsDNA in the absence of ATP. Binding to ssDNA does not require free DNA ends. This is Competence protein ComFA from Streptococcus pneumoniae (strain ATCC BAA-255 / R6).